Here is a 506-residue protein sequence, read N- to C-terminus: Gallate 1-beta-glucosyltransferase 84A23 (506 aa).

H20 (proton acceptor) is an active-site residue. H20 is a binding site for an anthocyanidin. Q345, H360, W363, N364, S365, and E368 together coordinate UDP-alpha-D-glucose. G383 is a binding site for an anthocyanidin. UDP-alpha-D-glucose-binding residues include D384 and Q385.

It belongs to the UDP-glycosyltransferase family. Expressed in roots of the seedlings.

It localises to the cytoplasm. The enzyme catalyses 3,4,5-trihydroxybenzoate + UDP-alpha-D-glucose = 1-O-galloyl-beta-D-glucose + UDP. It catalyses the reaction 3,4-dihydroxybenzoate + UDP-alpha-D-glucose = 1-O-(3,4-dihydroxy-benzoyl)-beta-D-glucose + UDP. It carries out the reaction 4-hydroxybenzoate + UDP-alpha-D-glucose = 4-(beta-D-glucosyloxy)benzoate + UDP + H(+). The catalysed reaction is (E)-cinnamate + UDP-alpha-D-glucose = 1-O-(trans-cinnamoyl)-beta-D-glucose + UDP. The enzyme catalyses (E)-sinapate + UDP-alpha-D-glucose = 1-O-(trans-sinapoyl)-beta-D-glucose + UDP. It catalyses the reaction (E)-4-coumarate + UDP-alpha-D-glucose = 1-O-(trans-4-coumaroyl)-beta-D-glucose + UDP. It carries out the reaction (E)-caffeate + UDP-alpha-D-glucose = 1-O-[(E)-caffeoyl]-beta-D-glucose + UDP. The catalysed reaction is (E)-ferulate + UDP-alpha-D-glucose = 1-O-[(E)-feruloyl]-beta-D-glucose + UDP. The enzyme catalyses genistein + UDP-alpha-D-glucose = genistein 7-O-beta-D-glucoside + UDP + H(+). It catalyses the reaction apigenin + UDP-alpha-D-glucose = apigenin 7-O-beta-D-glucoside + UDP + H(+). It carries out the reaction luteolin + UDP-alpha-D-glucose = luteolin 7-O-beta-D-glucoside + UDP + H(+). Glucosyltransferase that catalyzes the formation of 1-O-beta-D-glucose esters with hydroxybenzoic acids and cinnamic acid including its derivatives as preferred glucosyl acceptors. Has significant activity with gallic acid (3,4,5-trihydroxybenzoic acid), 3,4-dihydroxybenzoic acid, 4-hydroxybenzoic acid, cinnamic acid, sinapic acid, coumaric acid, caffeic acid and ferulic acid in vitro. Gallic acid is the predicted native substrate of the enzyme, which thus catalyzes the formation of 1-O-galloyl-beta-D-glucose, the first committed step of hydrolyzable tannins (HTs) biosynthesis, with punicalagin isomers being the major HTs of pomegranate. Catalyzes the formation of flavonoid glucosides with genistein, apigenin and luteolin in vitro. Has low activity with benzoic acid, 2-hydroxybenzoic acid, 3-hydroxybenzoic acid, 2,4-dihydroxybenzoic acid, naringenin and quercetin. No activity with catechol, resveratrol, chlorogenic acid, catechin and epicatechin (building blocks of proanthocyanidins) or cyanidin, delphinidin and pelargonidin (the three anthocyanidins). The sequence is that of Gallate 1-beta-glucosyltransferase 84A23 from Punica granatum (Pomegranate).